The following is an 804-amino-acid chain: Phenylalanine--tRNA ligase beta subunit (804 aa).

In terms of domain architecture, tRNA-binding spans 40–155 (DRGMKGVVIG…SDAPIGADAI (116 aa)). Residues 409–484 (QDSVVVTVTL…RLYGYDRLPA (76 aa)) enclose the B5 domain. Positions 462, 468, 471, and 472 each coordinate Mg(2+). The 94-residue stretch at 710-803 (PRFPSVVRDI…VEKQFGAVLR (94 aa)) folds into the FDX-ACB domain.

The protein belongs to the phenylalanyl-tRNA synthetase beta subunit family. Type 1 subfamily. Tetramer of two alpha and two beta subunits. Requires Mg(2+) as cofactor.

The protein localises to the cytoplasm. It catalyses the reaction tRNA(Phe) + L-phenylalanine + ATP = L-phenylalanyl-tRNA(Phe) + AMP + diphosphate + H(+). This Geobacillus kaustophilus (strain HTA426) protein is Phenylalanine--tRNA ligase beta subunit.